The sequence spans 165 residues: MKTSRLPIAIQQAVMRRLREKLAQANLKLGCNYPEPKLSYTQRGTSAGTAWLESYEIRLNPVLLLENSEAFIEEVVPHELAHLLVWKHFGRVAPHGKEWKWMMESVLGVPARRTHQFELQSVRRNTFPYRCKCQEHQLTVRRHNRVVRGEAVYRCVHCGEQLVAK.

The 142-residue stretch at Leu-22–Val-163 folds into the SprT-like domain. Residue His-78 coordinates Zn(2+). Glu-79 is an active-site residue. Residue His-82 coordinates Zn(2+).

This sequence belongs to the SprT family. It depends on Zn(2+) as a cofactor.

Its subcellular location is the cytoplasm. This chain is Protein SprT, found in Shigella dysenteriae serotype 1 (strain Sd197).